The chain runs to 252 residues: 3-dehydroquinate dehydratase (252 aa).

Residues Ser21, 46–48 (EWR), and Arg82 each bind 3-dehydroquinate. His143 acts as the Proton donor/acceptor in catalysis. The Schiff-base intermediate with substrate role is filled by Lys170. Positions 213, 232, and 236 each coordinate 3-dehydroquinate.

Belongs to the type-I 3-dehydroquinase family. As to quaternary structure, homodimer.

It carries out the reaction 3-dehydroquinate = 3-dehydroshikimate + H2O. Its pathway is metabolic intermediate biosynthesis; chorismate biosynthesis; chorismate from D-erythrose 4-phosphate and phosphoenolpyruvate: step 3/7. In terms of biological role, involved in the third step of the chorismate pathway, which leads to the biosynthesis of aromatic amino acids. Catalyzes the cis-dehydration of 3-dehydroquinate (DHQ) and introduces the first double bond of the aromatic ring to yield 3-dehydroshikimate. In Escherichia coli O127:H6 (strain E2348/69 / EPEC), this protein is 3-dehydroquinate dehydratase.